Here is a 184-residue protein sequence, read N- to C-terminus: dCTP deaminase (184 aa).

Residues 97–102 (RSTFAR) and aspartate 113 contribute to the dCTP site. Catalysis depends on glutamate 123, which acts as the Proton donor/acceptor. Tyrosine 155 and glutamine 162 together coordinate dCTP.

Belongs to the dCTP deaminase family. Homotrimer.

It carries out the reaction dCTP + H2O + H(+) = dUTP + NH4(+). It functions in the pathway pyrimidine metabolism; dUMP biosynthesis; dUMP from dCTP (dUTP route): step 1/2. Functionally, catalyzes the deamination of dCTP to dUTP. The protein is dCTP deaminase of Saccharolobus solfataricus (strain ATCC 35092 / DSM 1617 / JCM 11322 / P2) (Sulfolobus solfataricus).